We begin with the raw amino-acid sequence, 253 residues long: MSQPAAKASATAAVNPGPDGKGKAGPPPGPAPGSGPAPAPAPAPAQPAPAAKAELPPGSYKLVVFEQENFQGRRVEFSGECLNLGDRGFERVRSIIVTSGPWVAFEQSNFRGEMFVLEKGEYPRWDTWSSSYRSDRLMSFRPIKMDAQEHKLCLFEGANFKGNTMEIQEDDVPSLWVYGFCDRVGSVRVSSGTWVGYQYPGYRGYQYLLEPGDFRHWNEWGAFQPQMQAVRRLRDRQWHREGCFPVLAAEPPK.

Low complexity predominate over residues 1-18; sequence MSQPAAKASATAAVNPGP. The disordered stretch occupies residues 1-53; it reads MSQPAAKASATAAVNPGPDGKGKAGPPPGPAPGSGPAPAPAPAPAQPAPAAKA. The residue at position 2 (Ser-2) is an N-acetylserine. The N-terminal arm stretch occupies residues 2-59; sequence SQPAAKASATAAVNPGPDGKGKAGPPPGPAPGSGPAPAPAPAPAQPAPAAKAELPPGS. Residues 25 to 47 are compositionally biased toward pro residues; it reads GPPPGPAPGSGPAPAPAPAPAQP. Beta/gamma crystallin 'Greek key' domains are found at residues 60–99 and 100–144; these read YKLVVFEQENFQGRRVEFSGECLNLGDRGFERVRSIIVTS and GPWV…RPIK. A connecting peptide region spans residues 145-149; it reads MDAQE. 2 consecutive Beta/gamma crystallin 'Greek key' domains span residues 150–191 and 192–234; these read HKLC…RVSS and GTWV…RRLR. Residues 236 to 253 are C-terminal arm; sequence RQWHREGCFPVLAAEPPK.

The protein belongs to the beta/gamma-crystallin family. As to quaternary structure, homo/heterodimer, or complexes of higher-order. The structure of beta-crystallin oligomers seems to be stabilized through interactions between the N-terminal arms. Specific cleavages in the N-terminal arm occur during lens maturation and give rise to truncated forms, leading to impaired oligomerization and protein insolubilization.

In terms of biological role, crystallins are the dominant structural components of the vertebrate eye lens. The polypeptide is Beta-crystallin B1 (CRYBB1) (Bos taurus (Bovine)).